The following is a 532-amino-acid chain: Autophagy-related protein 21 (532 aa).

WD repeat units follow at residues 265–310 (AHDS…KPFN) and 321–360 (HNIAKVNCLSFSLDNSILGCGSESNTIHFFRLSKQPHESF). The L/FRRG motif signature appears at 317–321 (LRRGH). The segment at 360–380 (FEYEEDPANESDPDDEDRSSE) is disordered. A compositionally biased stretch (acidic residues) spans 361–378 (EYEEDPANESDPDDEDRS).

It belongs to the WD repeat PROPPIN family.

The protein localises to the cytoplasm. The protein resides in the membrane. It is found in the vacuole membrane. In terms of biological role, required for cytoplasm to vacuole transport (Cvt) vesicles formation and mitophagy. Involved in binding of phosphatidylethanolamine to ATG8 and in recruitment of ATG8 and ATG5 to the pre-autophagosomal structure. Protects ATG8 from ARG4-mediated cleavage. The protein is Autophagy-related protein 21 (ATG21) of Debaryomyces hansenii (strain ATCC 36239 / CBS 767 / BCRC 21394 / JCM 1990 / NBRC 0083 / IGC 2968) (Yeast).